A 339-amino-acid chain; its full sequence is Dihydroorotate dehydrogenase (quinone) (339 aa).

FMN-binding positions include 64 to 68 (AGADK) and Thr88. Lys68 is a substrate binding site. Residue 113–117 (NRNGF) coordinates substrate. Residues Asn141 and Asn174 each contribute to the FMN site. Asn174 lines the substrate pocket. Ser177 acts as the Nucleophile in catalysis. Residue Asn179 coordinates substrate. FMN contacts are provided by Lys219 and Thr247. Residue 248–249 (NT) coordinates substrate. Residues Gly270, Gly299, and 320-321 (YS) each bind FMN.

This sequence belongs to the dihydroorotate dehydrogenase family. Type 2 subfamily. Monomer. FMN serves as cofactor.

The protein localises to the cell membrane. It catalyses the reaction (S)-dihydroorotate + a quinone = orotate + a quinol. Its pathway is pyrimidine metabolism; UMP biosynthesis via de novo pathway; orotate from (S)-dihydroorotate (quinone route): step 1/1. In terms of biological role, catalyzes the conversion of dihydroorotate to orotate with quinone as electron acceptor. The protein is Dihydroorotate dehydrogenase (quinone) (pyrD) of Haemophilus influenzae (strain ATCC 51907 / DSM 11121 / KW20 / Rd).